Here is a 350-residue protein sequence, read N- to C-terminus: Quinolinate phosphoribosyltransferase [decarboxylating] 1 (350 aa).

Residues Arg141, 172-174 (TRK), Arg196, Lys206, Glu239, Asp266, 298-300 (SGN), and 319-321 (SGA) contribute to the substrate site.

The protein belongs to the NadC/ModD family.

The catalysed reaction is nicotinate beta-D-ribonucleotide + CO2 + diphosphate = quinolinate + 5-phospho-alpha-D-ribose 1-diphosphate + 2 H(+). It functions in the pathway alkaloid biosynthesis; nicotine biosynthesis. The protein operates within cofactor biosynthesis; NAD(+) biosynthesis; nicotinate D-ribonucleotide from quinolinate: step 1/1. Functionally, involved in the biosynthesis of pyridine alkaloid natural products, leading mainly to the production of anabasine, anatabine, nicotine and nornicotine, effective deterrents against herbivores with antiparasitic and pesticide properties (neurotoxins); nornicotine serves as the precursor in the synthesis of the carcinogen compound N'-nitrosonornicotine (NNN). Involved in the catabolism of quinolinic acid (QA). The sequence is that of Quinolinate phosphoribosyltransferase [decarboxylating] 1 from Nicotiana glauca (Glaucous tobacco).